We begin with the raw amino-acid sequence, 694 residues long: PTS system fructose-specific EIIABC component (694 aa).

The PTS EIIA type-2 domain occupies 4-149 (PLLSAELFFN…NGLINLIDSF (146 aa)). His68 functions as the Tele-phosphohistidine intermediate; for EIIA activity in the catalytic mechanism. His68 carries the post-translational modification Phosphohistidine; by HPr. Residues 179-275 (FVAVTACPTG…PQTVYDQVVK (97 aa)) form the PTS EIIB type-2 domain. Catalysis depends on Cys185, which acts as the Phosphocysteine intermediate; for EIIB activity. A Phosphocysteine; by EIIA modification is found at Cys185. A PTS EIIC type-2 domain is found at 310–687 (IYRAILSGVS…NLLVVRKKTK (378 aa)). 10 consecutive transmembrane segments (helical) span residues 318 to 338 (VSYMLPFVVFGGILIAIAFLI), 364 to 384 (GGLSFGLIVPILSAYIAFALV), 390 to 410 (LPGFIVGLISAGKFLLNIDIV), 422 to 442 (VSSGFFGAIFGGLLAAVLIIV), 461 to 481 (ILFIPLLGTLVTAALFWVINI), 502 to 522 (LAPLLGLVIGLMMCFDLGGPV), 542 to 562 (VAMASAILSGMVPPLGIAIAA), 576 to 596 (AAYACYVMGLSFISEGAIPFV), 602 to 622 (IMLAANLIGGAVCGVLTGAFA), and 655 to 675 (GVGLALLALIVSSFISAGIII).

The protein resides in the cell membrane. The catalysed reaction is D-fructose(out) + N(pros)-phospho-L-histidyl-[protein] = D-fructose 1-phosphate(in) + L-histidyl-[protein]. In terms of biological role, the phosphoenolpyruvate-dependent sugar phosphotransferase system (sugar PTS), a major carbohydrate active transport system, catalyzes the phosphorylation of incoming sugar substrates concomitantly with their translocation across the cell membrane. This system is involved in fructose transport. The polypeptide is PTS system fructose-specific EIIABC component (Mycoplasma pneumoniae (strain ATCC 29342 / M129 / Subtype 1) (Mycoplasmoides pneumoniae)).